The chain runs to 318 residues: Tyrosine recombinase XerC (318 aa).

In terms of domain architecture, Core-binding (CB) spans 17 to 108 (PEVMAERRRW…GLRSFLRYLE (92 aa)). The Tyr recombinase domain occupies 129-312 (SLPKALTDRE…DSARLLEIYD (184 aa)). Residues arginine 172, lysine 196, histidine 264, arginine 267, and histidine 290 contribute to the active site. Tyrosine 299 (O-(3'-phospho-DNA)-tyrosine intermediate) is an active-site residue.

It belongs to the 'phage' integrase family. XerC subfamily. Forms a cyclic heterotetrameric complex composed of two molecules of XerC and two molecules of XerD.

It localises to the cytoplasm. Functionally, site-specific tyrosine recombinase, which acts by catalyzing the cutting and rejoining of the recombining DNA molecules. The XerC-XerD complex is essential to convert dimers of the bacterial chromosome into monomers to permit their segregation at cell division. It also contributes to the segregational stability of plasmids. The sequence is that of Tyrosine recombinase XerC from Rhizobium meliloti (strain 1021) (Ensifer meliloti).